Consider the following 1186-residue polypeptide: MYND-type zinc finger-containing chromatin reader ZMYND8 (1186 aa).

Positions 1-12 (MDISTRSKDPGS) are enriched in basic and acidic residues. The segment at 1 to 57 (MDISTRSKDPGSAERTAQKRKFPSPPHSSNGHSPQDTSTSPIKKKKKPGLLNSNNKE) is disordered. A required for interaction with CCNT1 region spans residues 1–850 (MDISTRSKDP…QQQQQQQNQQ (850 aa)). Residue serine 12 forms a Glycyl lysine isopeptide (Lys-Gly) (interchain with G-Cter in SUMO2) linkage. Serine 24 carries the phosphoserine modification. Residues lysine 56 and lysine 70 each participate in a glycyl lysine isopeptide (Lys-Gly) (interchain with G-Cter in SUMO2) cross-link. Positions 75–268 (TDPVDVVPQD…YLAACQKRDN (194 aa)) are interaction with histone H3K4me0. Positions 75–406 (TDPVDVVPQD…VKLNFDMTAS (332 aa)) are interaction with histone H3K14ac. The PHD-type zinc finger occupies 88–133 (DFYCWVCHREGQVLCCELCPRVYHAKCLRLTSEPEGDWFCPECEKI). The tract at residues 88–327 (DFYCWVCHRE…INNCYLMSKE (240 aa)) is required for interaction with histone H3 and histone H4. Positions 91, 94, 103, 106, 111, 114, 127, and 130 each coordinate Zn(2+). In terms of domain architecture, Bromo spans 145-252 (AMTMLTIEQL…KICEHEMNEI (108 aa)). Zn(2+) is bound by residues cysteine 255, cysteine 258, and cysteine 274. Positions 277-327 (PHPLVWAKLKGFPFWPAKALRDKDGQVDARFFGQHDRAWVPINNCYLMSKE) constitute a PWWP domain. Lysine 390 is covalently cross-linked (Glycyl lysine isopeptide (Lys-Gly) (interchain with G-Cter in SUMO2)). Residue threonine 404 is modified to Phosphothreonine. Serine 406 carries the post-translational modification Phosphoserine. The disordered stretch occupies residues 412–512 (SKPVLSGGTG…TTKTDKTSTT (101 aa)). Lysine 413 bears the N6-acetyllysine; alternate mark. Lysine 413 participates in a covalent cross-link: Glycyl lysine isopeptide (Lys-Gly) (interchain with G-Cter in SUMO2); alternate. A phosphoserine mark is found at serine 417, serine 425, and serine 432. The segment covering 433–442 (PMSTNSSVHT) has biased composition (polar residues). Phosphoserine is present on serine 444. A Glycyl lysine isopeptide (Lys-Gly) (interchain with G-Cter in SUMO2) cross-link involves residue lysine 453. Residues serine 460, serine 462, serine 465, serine 486, serine 490, and serine 495 each carry the phosphoserine modification. The span at 472 to 489 (STASPASTKTGQAGSLSG) shows a compositional bias: polar residues. A Glycyl lysine isopeptide (Lys-Gly) (interchain with G-Cter in SUMO2) cross-link involves residue lysine 505. A phosphoserine mark is found at serine 514 and serine 523. A Glycyl lysine isopeptide (Lys-Gly) (interchain with G-Cter in SUMO2) cross-link involves residue lysine 530. The residue at position 541 (threonine 541) is a Phosphothreonine. Phosphoserine is present on serine 547. Lysine 549 is covalently cross-linked (Glycyl lysine isopeptide (Lys-Gly) (interchain with G-Cter in SUMO2)). Position 563 is a phosphothreonine (threonine 563). The disordered stretch occupies residues 582-884 (TAVEHSDSED…ITQSPSTSTI (303 aa)). 2 stretches are compositionally biased toward basic and acidic residues: residues 585–597 (EHSD…KSDS) and 606–631 (DEQK…EPSA). Residues lysine 611 and lysine 645 each participate in a glycyl lysine isopeptide (Lys-Gly) (interchain with G-Cter in SUMO2) cross-link. A phosphoserine mark is found at serine 652 and serine 655. A compositionally biased stretch (basic and acidic residues) spans 656-696 (EKADPGAVKDKASPEPEKDFSEKAKPSPHPIKDKLKGKDET). Lysine 657 is covalently cross-linked (Glycyl lysine isopeptide (Lys-Gly) (interchain with G-Cter in SUMO2)). Residues serine 668, serine 682, serine 707, serine 709, and serine 737 each carry the phosphoserine modification. Over residues 718–738 (GEDHSGREGRKNKKEPKEPSP) the composition is skewed to basic and acidic residues. Threonine 746 bears the Phosphothreonine mark. A phosphoserine mark is found at serine 754 and serine 756. The span at 766 to 799 (SSAQTSAAGATATTSTSSTVTVTAPAPAATGSPV) shows a compositional bias: low complexity. Polar residues predominate over residues 818 to 832 (VWNSSSKFQTSSQKW). Residues 835–857 (QKMQRQQQQQQQQNQQQQPQSSQ) show a composition bias toward low complexity. Over residues 873-884 (KEITQSPSTSTI) the composition is skewed to polar residues. Residues 875 to 1047 (ITQSPSTSTI…YCCWNTSYCD (173 aa)) are required for homodimerization. The Zn(2+) site is built by cysteine 1028, cysteine 1031, cysteine 1039, cysteine 1040, cysteine 1046, cysteine 1050, histidine 1058, and cysteine 1062. The segment at 1028–1062 (CANCKKEAIFYCCWNTSYCDYPCQQAHWPEHMKSC) adopts an MYND-type zinc-finger fold. The segment at 1028 to 1062 (CANCKKEAIFYCCWNTSYCDYPCQQAHWPEHMKSC) is required for recruitment to DNA damage sites and for interaction with the NuRD complex, CHD4, HDAC1, HDAC2 and KDM1A. Positions 1071–1186 (QEADAEVNTE…KESRLDTFWD (116 aa)) are disordered. Residues 1085 to 1103 (SSQGSSSSTQSAPSETASA) are compositionally biased toward low complexity. The segment covering 1104-1116 (SKEKETSAEKSKE) has biased composition (basic and acidic residues). Lysine 1115 is covalently cross-linked (Glycyl lysine isopeptide (Lys-Gly) (interchain with G-Cter in SUMO2)). Position 1119 is a phosphoserine (serine 1119). Residues 1121 to 1140 (LDLSGSRETPSSILLGSNQG) are compositionally biased toward polar residues. Serine 1141 carries the post-translational modification Phosphoserine. The interaction with PRKCB1 stretch occupies residues 1147 to 1186 (NKSSWSSSDEKRGSTRSDHNTSTSTKSLLPKESRLDTFWD). Composition is skewed to basic and acidic residues over residues 1154–1165 (SDEKRGSTRSDH) and 1175–1186 (LPKESRLDTFWD).

In terms of assembly, monomer and homodimer. Interacts with NuRD subcomplexes containing GATAD2A. Interacts with the histone deacetylase NuRD complex subunit CHD4; the interaction is direct, appears to occur with monomeric ZMYND8, and is increased following DNA damage. Interacts (via N-terminus) with the P-TEFb complex subunit CCNT1 (via central region); the interaction is direct and the association appears to occur between homodimeric ZMYND8 and the activated form of the P-TEFb complex. Interacts (via N-terminus) with DBN1 (via ADF-H domain); the interaction leads to sequestering of ZMYND8 in the cytoplasm. Interacts with the P-TEFb complex subunit CDK9; the association appears to occur between homodimeric ZMYND8 and the activated form of the P-TEFb complex. Interacts with EZH2; the interaction is dependent on the presence of chromatin. Interacts (via MYND domain) with the NuRD complex subunit GATAD2A. Interacts with histone H3 (via N-terminus) that is both methylated at 'Lys-4' (H3K4me1) and acetylated at 'Lys-14' (H3K14ac), with histone H3 (via N-terminus) unmodified at 'Lys-4' (H3K4me0) and acetylated at 'Lys-14' (H3K14ac), and with histone H3 (via N-terminus) di-methylated at 'Lys-36' (H3K36me2). Interacts (via Bromo domain) with histone H4 acetylated at 'Lys-16' (H4K16ac). Interacts with HDAC1. Interacts with HDAC2. Interacts with KDM1A. Interacts with KDM5C. Interacts with KDM5D. Interacts in vitro with PRKCB. Interacts with RNA polymerase II subunit POLR2A phosphorylated at 'Ser-5'. Interacts with ZNF592. Interacts with ZNF687. Does not interact with GATAD2B. Expressed in neurons (at protein level). Absent in astrocytes (at protein level). Expressed in all tissues examined with highest expression in brain, lung, pancreas, and placenta. Expressed in cutaneous T-cell lymphomas (CTCL).

The protein localises to the nucleus. Its subcellular location is the chromosome. The protein resides in the cytoplasm. Chromatin reader that recognizes dual histone modifications such as histone H3.1 dimethylated at 'Lys-36' and histone H4 acetylated at 'Lys-16' (H3.1K36me2-H4K16ac) and histone H3 methylated at 'Lys-4' and histone H4 acetylated at 'Lys-14' (H3K4me1-H3K14ac). May act as a transcriptional corepressor for KDM5D by recognizing the dual histone signature H3K4me1-H3K14ac. May also act as a transcriptional corepressor for KDM5C and EZH2. Recognizes acetylated histone H4 and recruits the NuRD chromatin remodeling complex to damaged chromatin for transcriptional repression and double-strand break repair by homologous recombination. Also activates transcription elongation by RNA polymerase II through recruiting the P-TEFb complex to target promoters. Localizes to H3.1K36me2-H4K16ac marks at all-trans-retinoic acid (ATRA)-responsive genes and positively regulates their expression. Promotes neuronal differentiation by associating with regulatory regions within the MAPT gene, to enhance transcription of a protein-coding MAPT isoform and suppress the non-coding MAPT213 isoform. Suppresses breast cancer, and prostate cancer cell invasion and metastasis. This is MYND-type zinc finger-containing chromatin reader ZMYND8 (ZMYND8) from Homo sapiens (Human).